Here is a 236-residue protein sequence, read N- to C-terminus: Orotidine 5'-phosphate decarboxylase (236 aa).

Residues D16, K38, 65–74 (DLKYHDIPNT), T124, R185, Q194, G214, and R215 contribute to the substrate site. K67 functions as the Proton donor in the catalytic mechanism.

This sequence belongs to the OMP decarboxylase family. Type 1 subfamily. As to quaternary structure, homodimer.

The catalysed reaction is orotidine 5'-phosphate + H(+) = UMP + CO2. It participates in pyrimidine metabolism; UMP biosynthesis via de novo pathway; UMP from orotate: step 2/2. In terms of biological role, catalyzes the decarboxylation of orotidine 5'-monophosphate (OMP) to uridine 5'-monophosphate (UMP). This Hydrogenovibrio crunogenus (strain DSM 25203 / XCL-2) (Thiomicrospira crunogena) protein is Orotidine 5'-phosphate decarboxylase.